The primary structure comprises 461 residues: Alpha-L-fucosidase (461 aa).

A signal peptide spans 1–18 (MKMIIIFFILLILNLIKS).

The protein belongs to the glycosyl hydrolase 29 family.

The catalysed reaction is an alpha-L-fucoside + H2O = L-fucose + an alcohol. In terms of biological role, alpha-L-fucosidase is responsible for hydrolyzing the alpha-1,6-linked fucose joined to the reducing-end N-acetylglucosamine of the carbohydrate moieties of glycoproteins. This Dictyostelium discoideum (Social amoeba) protein is Alpha-L-fucosidase (alfA).